The following is a 47-amino-acid chain: Zinc-finger protein TK0143 (47 aa).

The C2H2-type zinc-finger motif lies at 18 to 41 (FRCPRCGMVFRSAKAYTRHVNKAH). Residues C20, C23, H36, and H41 each coordinate Zn(2+).

As to quaternary structure, crystallized in association with 70S ribosomes. The cofactor is Zn(2+).

This chain is Zinc-finger protein TK0143, found in Thermococcus kodakarensis (strain ATCC BAA-918 / JCM 12380 / KOD1) (Pyrococcus kodakaraensis (strain KOD1)).